The chain runs to 567 residues: Oxygen-dependent choline dehydrogenase (567 aa).

4–33 (DYIIIGAGSAGNVLAARLTEDADVTVLLLE) is an FAD binding site. Residue H473 is the Proton acceptor of the active site.

This sequence belongs to the GMC oxidoreductase family. The cofactor is FAD.

It carries out the reaction choline + A = betaine aldehyde + AH2. The catalysed reaction is betaine aldehyde + NAD(+) + H2O = glycine betaine + NADH + 2 H(+). It functions in the pathway amine and polyamine biosynthesis; betaine biosynthesis via choline pathway; betaine aldehyde from choline (cytochrome c reductase route): step 1/1. In terms of biological role, involved in the biosynthesis of the osmoprotectant glycine betaine. Catalyzes the oxidation of choline to betaine aldehyde and betaine aldehyde to glycine betaine at the same rate. This chain is Oxygen-dependent choline dehydrogenase, found in Yersinia pseudotuberculosis serotype O:1b (strain IP 31758).